Here is a 218-residue protein sequence, read N- to C-terminus: 3,4-dihydroxy-2-butanone 4-phosphate synthase (218 aa).

D-ribulose 5-phosphate-binding positions include 38 to 39 (RE), D43, 151 to 155 (RRGHT), and E175. E39 provides a ligand contact to Mg(2+). H154 lines the Mg(2+) pocket.

This sequence belongs to the DHBP synthase family. In terms of assembly, homodimer. Requires Mg(2+) as cofactor. Mn(2+) serves as cofactor.

It catalyses the reaction D-ribulose 5-phosphate = (2S)-2-hydroxy-3-oxobutyl phosphate + formate + H(+). Its pathway is cofactor biosynthesis; riboflavin biosynthesis; 2-hydroxy-3-oxobutyl phosphate from D-ribulose 5-phosphate: step 1/1. Its function is as follows. Catalyzes the conversion of D-ribulose 5-phosphate to formate and 3,4-dihydroxy-2-butanone 4-phosphate. In Vibrio cholerae serotype O1 (strain M66-2), this protein is 3,4-dihydroxy-2-butanone 4-phosphate synthase.